Consider the following 252-residue polypeptide: MPSTERVAKVVLVDIEGTTTSISFVHDVLFPYAKNNVQKFLEESWESSSEVKQIVRELQQVPQYAEYTATLRVPPKEVDVQVITGFVRYLIDKDLKVTPLKTLQGLIWQQGYETGELMGHVFNDVPGAFEAWREAGLRIAVYSSGSVAAQKLIFRYSIVGDLLTHLSAHFDTHVGHKQESQSYANIAQSLGEDPSHILFLTDIPGEAAAARSAGLQTIILQRPGNTPLTDDQKYSNELIADFSSLHTLQLPE.

D14 and E16 together coordinate Mg(2+). Residues 143–144 and K177 contribute to the substrate site; that span reads SS. Mg(2+) is bound at residue D202.

It belongs to the HAD-like hydrolase superfamily. MasA/MtnC family. As to quaternary structure, monomer. Mg(2+) is required as a cofactor.

Its subcellular location is the cytoplasm. The protein localises to the nucleus. The catalysed reaction is 5-methylsulfanyl-2,3-dioxopentyl phosphate + H2O = 1,2-dihydroxy-5-(methylsulfanyl)pent-1-en-3-one + phosphate. Its pathway is amino-acid biosynthesis; L-methionine biosynthesis via salvage pathway; L-methionine from S-methyl-5-thio-alpha-D-ribose 1-phosphate: step 3/6. It participates in amino-acid biosynthesis; L-methionine biosynthesis via salvage pathway; L-methionine from S-methyl-5-thio-alpha-D-ribose 1-phosphate: step 4/6. Functionally, bifunctional enzyme that catalyzes the enolization of 2,3-diketo-5-methylthiopentyl-1-phosphate (DK-MTP-1-P) into the intermediate 2-hydroxy-3-keto-5-methylthiopentenyl-1-phosphate (HK-MTPenyl-1-P), which is then dephosphorylated to form the acireductone 1,2-dihydroxy-3-keto-5-methylthiopentene (DHK-MTPene). The sequence is that of Enolase-phosphatase E1 from Drosophila persimilis (Fruit fly).